A 332-amino-acid chain; its full sequence is Heat-inducible transcription repressor HrcA (332 aa).

This sequence belongs to the HrcA family.

In terms of biological role, negative regulator of class I heat shock genes (grpE-dnaK-dnaJ and groELS operons). Prevents heat-shock induction of these operons. The chain is Heat-inducible transcription repressor HrcA from Mycoplasma mobile (strain ATCC 43663 / 163K / NCTC 11711) (Mesomycoplasma mobile).